A 155-amino-acid polypeptide reads, in one-letter code: Small ribosomal subunit protein uS7 (155 aa).

It belongs to the universal ribosomal protein uS7 family. In terms of assembly, part of the 30S ribosomal subunit. Contacts proteins S9 and S11.

One of the primary rRNA binding proteins, it binds directly to 16S rRNA where it nucleates assembly of the head domain of the 30S subunit. Is located at the subunit interface close to the decoding center, probably blocks exit of the E-site tRNA. The polypeptide is Small ribosomal subunit protein uS7 (Corynebacterium diphtheriae (strain ATCC 700971 / NCTC 13129 / Biotype gravis)).